A 201-amino-acid polypeptide reads, in one-letter code: Small ribosomal subunit protein uS4 (201 aa).

An S4 RNA-binding domain is found at 92 to 155 (ARLDNVVFRL…KSLEVIANSL (64 aa)).

The protein belongs to the universal ribosomal protein uS4 family. As to quaternary structure, part of the 30S ribosomal subunit. Contacts protein S5. The interaction surface between S4 and S5 is involved in control of translational fidelity.

Functionally, one of the primary rRNA binding proteins, it binds directly to 16S rRNA where it nucleates assembly of the body of the 30S subunit. In terms of biological role, with S5 and S12 plays an important role in translational accuracy. In Phocaeicola vulgatus (strain ATCC 8482 / DSM 1447 / JCM 5826 / CCUG 4940 / NBRC 14291 / NCTC 11154) (Bacteroides vulgatus), this protein is Small ribosomal subunit protein uS4.